The sequence spans 172 residues: Macro domain-containing protein lp_3408 (172 aa).

Residues 1–171 (MVEIKVIHGD…VFSTALAALT (171 aa)) enclose the Macro domain.

The protein belongs to the MacroD-type family.

The chain is Macro domain-containing protein lp_3408 from Lactiplantibacillus plantarum (strain ATCC BAA-793 / NCIMB 8826 / WCFS1) (Lactobacillus plantarum).